The following is a 208-amino-acid chain: Protein IncB (208 aa).

In terms of biological role, this protein is thought to be cis acting and to contain the putative attachment site on the DNA for the cellular partition apparatus. This Escherichia coli protein is Protein IncB (incB).